The chain runs to 334 residues: Putative fatty acid elongase 1 (334 aa).

Residues 1-51 (MDLTGAHMLKIHRPSIDHPFGVDLWHLFEQLSIKTIGWNPSEFEYIPGKTP) lie on the Lumenal side of the membrane. The chain crosses the membrane as a helical span at residues 52-72 (MSQWSSVIVSITAYYVIILSG). The Cytoplasmic segment spans residues 73 to 86 (RAIMTNRKPLKQRR). A helical transmembrane segment spans residues 87–107 (LFQLHNFILTIISGALLALLV). Topologically, residues 108 to 135 (EEVFRNYMRNGLFYCVCDSRHFTQRLVT) are lumenal. A helical transmembrane segment spans residues 136 to 156 (LYYLNYLTKYLELMDTVFLFL). At 157-160 (KKKP) the chain is on the cytoplasmic side. A helical membrane pass occupies residues 161–181 (LAFLHCYHHGITALLCFTQLL). Over 182 to 187 (GRTSVQ) the chain is Lumenal. The chain crosses the membrane as a helical span at residues 188–208 (WGVIGLNLYVHVIMYSYYFLA). Residues 209–224 (ACGRRVWWKQWVTRVQ) are Cytoplasmic-facing. The helical transmembrane segment at 225-245 (IIQFVLDLILCYFGTYSHIAF) threads the bilayer. At 246–260 (RYFPWLPHVGDCSGS) the chain is on the lumenal side. Residues 261 to 281 (LFAAFFGCGVLSSYLFLFIGF) form a helical membrane-spanning segment. At 282–334 (YINTYIKRGAKKNQRKAAGKADNTSVAAAAGSEALAATTATNASPFSARSRKL) the chain is on the cytoplasmic side. Ser325 is modified (phosphoserine).

Belongs to the ELO family.

The protein resides in the endoplasmic reticulum membrane. The catalysed reaction is a very-long-chain acyl-CoA + malonyl-CoA + H(+) = a very-long-chain 3-oxoacyl-CoA + CO2 + CoA. In terms of biological role, may be involved in the synthesis of very long chain fatty acids. In Schizosaccharomyces pombe (strain 972 / ATCC 24843) (Fission yeast), this protein is Putative fatty acid elongase 1.